The primary structure comprises 292 residues: Beta-lactamase-like protein 2 homolog (292 aa).

His76, His78, Asp80, His81, His145, Asp163, and His198 together coordinate Zn(2+).

The protein belongs to the metallo-beta-lactamase superfamily. Glyoxalase II family.

The chain is Beta-lactamase-like protein 2 homolog from Drosophila melanogaster (Fruit fly).